Reading from the N-terminus, the 246-residue chain is uncharacterized protein (246 aa).

2 stretches are compositionally biased toward basic residues: residues 1 to 10 (MVWRFQKHIG) and 79 to 97 (TRRR…KAGR). The tract at residues 1–184 (MVWRFQKHIG…LPPAHVPPTL (184 aa)) is disordered. Pro residues predominate over residues 158–180 (PPFPPPPPPGDPTPPSPLPPAHV).

This is an uncharacterized protein from Homo sapiens (Human).